Reading from the N-terminus, the 546-residue chain is Membrane protein insertase YidC (546 aa).

A helical transmembrane segment spans residues 8–28 (ILLATVLSVGILILWQVIFPT). A disordered region spans residues 31-70 (VPPKPAPPPAAEVAKPAAPASPAPGAAAPAVPAPPPDAPE). Over residues 41-60 (AEVAKPAAPASPAPGAAAPA) the composition is skewed to low complexity. 5 helical membrane-spanning segments follow: residues 326-346 (IDYGAVAKFFALFARGLLYVM), 356-376 (WGVAIILLTVLVRLVLFPLTY), 422-442 (LGGCLPMLLQMPVWFALYAAL), 459-479 (LTAHDPYFILPIAMGISSFVM), and 498-518 (FFPGFFTVIMLFVPGGLTLYI).

It belongs to the OXA1/ALB3/YidC family. Type 1 subfamily. Interacts with the Sec translocase complex via SecD. Specifically interacts with transmembrane segments of nascent integral membrane proteins during membrane integration.

It localises to the cell inner membrane. Required for the insertion and/or proper folding and/or complex formation of integral membrane proteins into the membrane. Involved in integration of membrane proteins that insert both dependently and independently of the Sec translocase complex, as well as at least some lipoproteins. Aids folding of multispanning membrane proteins. The chain is Membrane protein insertase YidC from Anaeromyxobacter sp. (strain K).